The chain runs to 359 residues: MNIKQLVRKNIQELQPYQSARTIGGKGDIWLNANECPTFNRLKLENIFLNRYPECQPRELLLRYSSYIGLDKKNILITRGSDEAIELLIKTFCEPQCDRIVFCPPTYDMYNVSANIMGVECLQIPLLNHSWQLDLKVIKKCINNFKLIYLCNPNNPTGSLINFRDVLALLKMTYGKSLVIIDEAYIEFSPMNSLVNLISQYSNLVVLRTLSKAFSLAGLRCGFVLANFSVIKFLLKVINPYPISTPTSSIAIQFLSNINISKMQDRVFSLILNRCWLINELKLISNCIDHIFYSASNYVLVRFRNSNKVFHELSNQGIIVRDQSKKINLKNCIRISIGTSQECLKVIHAIRKIDCLYVN.

Lysine 212 carries the post-translational modification N6-(pyridoxal phosphate)lysine.

It belongs to the class-II pyridoxal-phosphate-dependent aminotransferase family. Histidinol-phosphate aminotransferase subfamily. Homodimer. Pyridoxal 5'-phosphate serves as cofactor.

The enzyme catalyses L-histidinol phosphate + 2-oxoglutarate = 3-(imidazol-4-yl)-2-oxopropyl phosphate + L-glutamate. It participates in amino-acid biosynthesis; L-histidine biosynthesis; L-histidine from 5-phospho-alpha-D-ribose 1-diphosphate: step 7/9. The protein is Histidinol-phosphate aminotransferase of Buchnera aphidicola subsp. Schlechtendalia chinensis.